The chain runs to 199 residues: Superoxide dismutase [Fe] (199 aa).

His28, His80, Asp162, and His166 together coordinate Fe cation.

This sequence belongs to the iron/manganese superoxide dismutase family. In terms of assembly, homodimer. Fe cation serves as cofactor.

It is found in the cytoplasm. It carries out the reaction 2 superoxide + 2 H(+) = H2O2 + O2. Functionally, destroys superoxide anion radicals which are normally produced within the cells and which are toxic to biological systems. The protein is Superoxide dismutase [Fe] (sodB) of Leptolyngbya boryana (Plectonema boryanum).